Here is a 185-residue protein sequence, read N- to C-terminus: Photosystem I assembly protein Ycf4 (185 aa).

Helical transmembrane passes span 20 to 40 and 57 to 77; these read GNFF…AVGA and ILFF…LFIS.

The protein belongs to the Ycf4 family.

The protein resides in the plastid. It localises to the chloroplast thylakoid membrane. In terms of biological role, seems to be required for the assembly of the photosystem I complex. The sequence is that of Photosystem I assembly protein Ycf4 from Sorghum bicolor (Sorghum).